A 345-amino-acid chain; its full sequence is METGGLSAAALANGDLGSQRERTLVPERLQKREHERQLEVERRKQKRQDQEVEEEKSDFFAAAFARERSAVEELLESGESVERLEEAAARLQGLQKLINDSVLFLAAYDLRQAQEVLARLQAALAKRRQELQPKKRFAFKTRKKDAASATQVASAPDAPAAEGSLTSPPPLKEEGDFDSSWICGFSNLQSQVLEKRAEELHQQDVLLTQLRNCTIKLYGNPNTLRLTKAQGCTLLCGPVSTSVFLEDCSDCVLAVACQQLRVHTTKDTRIFLQVTSRAIMEDCTGIQFAPYTWSYPGIDKDFEGSGLDKNKNNWNDVDDFNWLARDVASPNWNVLPEEERRIQWD.

Methionine 1 carries the N-acetylmethionine modification. The segment at 1 to 56 (METGGLSAAALANGDLGSQRERTLVPERLQKREHERQLEVERRKQKRQDQEVEEEK) is disordered. Residues 18–50 (SQRERTLVPERLQKREHERQLEVERRKQKRQDQ) are compositionally biased toward basic and acidic residues. Phosphoserine occurs at positions 80 and 167. The disordered stretch occupies residues 139-170 (FKTRKKDAASATQVASAPDAPAAEGSLTSPPP). Residues 170–322 (PLKEEGDFDS…NWNDVDDFNW (153 aa)) enclose the C-CAP/cofactor C-like domain.

This sequence belongs to the TBCC family. As to quaternary structure, supercomplex made of cofactors A to E. Cofactors A and D function by capturing and stabilizing tubulin in a quasi-native conformation. Cofactor E binds to the cofactor D-tubulin complex; interaction with cofactor C then causes the release of tubulin polypeptides that are committed to the native state.

The protein resides in the cytoplasm. Functionally, tubulin-folding protein; involved in the final step of the tubulin folding pathway. In Bos taurus (Bovine), this protein is Tubulin-specific chaperone C (TBCC).